The chain runs to 214 residues: Clavatol biosynthesis cluster protein B (214 aa).

An N-terminal signal peptide occupies residues Met-1–Ala-17. Residues Asn-103 and Asn-204 are each glycosylated (N-linked (GlcNAc...) asparagine).

It participates in secondary metabolite biosynthesis. Part of the cla gene cluster that produces clavatol and ortho-quinone methide. The clavatol biosynthesis cluster cla and the terrestric acid cluster tra are both involved in the production of peniphenones and penilactones. The non-reducing PKS claF is responsible for the formation of clavatol from successive condensations of 3 malonyl-CoA units, presumably with a simple acetyl-CoA starter unit, and 2 methylation steps. The esterase claE probably collaborates with claF by catalyzing the hydrolysis of ACP-bound acyl intermediates to free the ACP from stalled intermediates. The clavatol oxidase claD then converts clavatol to hydroxyclavatol. Spontaneous dehydration of hydroxyclavatol leads to the accumulation of the highly active ortho-quinone methide. On the other hand, the PKS-NRPS hybrid traA is involved in the formation of crustosic acid, with the help of traB and traD. The polyketide synthase module (PKS) of traA is responsible for the synthesis of the polyketide backbone via the condensation of an acetyl-CoA starter unit with 3 malonyl-CoA units. The downstream nonribosomal peptide synthetase (NRPS) module then amidates the carboxyl end of the polyketide with L-malic acid. Because traA lacks a designated enoylreductase (ER) domain, the required activity is provided the enoyl reductase traG. Crustosic acid undergoes decarboxylation and isomerization to the terrestric acid, catalyzed by the 2-oxoglutarate-dependent dioxygenase traH. Both acids are further converted to the 2 gamma-butyrolactones (R)-5-methyltetronic acid and (S)-5-carboxylmethyltetronic acid, with involvement of the cytochrome P450 monooxygenase claJ. Spontaneous addition of the methide to these gamma-butyrolactones leads to peniphenone D and penilactone D, which undergo again stereospecific attacking by methide to give penilactones A and B. The function of claB has not been investigated yet. In Penicillium crustosum (Blue mold fungus), this protein is Clavatol biosynthesis cluster protein B.